We begin with the raw amino-acid sequence, 283 residues long: F-box only protein 27 (283 aa).

Residues 1-23 (MGASVSRGRAARVPAPEPEPEEA) form a disordered region. The region spanning 23-70 (ALDLSQLPPELLLVVLSHVPPRTLLGRCRQVCRGWRALVDGQALWLLI) is the F-box domain. In terms of domain architecture, FBA spans 104 to 280 (FCARRPIGRN…VTNSSVIVRV (177 aa)).

In terms of assembly, part of a SCF (SKP1-cullin-F-box) protein ligase complex. Interacts with SKP1 and CUL1. Predominantly expressed in brain, heart and kidney. Expressed at lower levels in liver and lung.

Functionally, substrate-recognition component of the SCF (SKP1-CUL1-F-box protein)-type E3 ubiquitin ligase complex. Able to recognize and bind denatured glycoproteins, which are modified with complex-type oligosaccharides. This Homo sapiens (Human) protein is F-box only protein 27 (FBXO27).